Here is a 187-residue protein sequence, read N- to C-terminus: Cell division protein SepF (187 aa).

A disordered region spans residues 21–97; it reads EVEVPDKQQQ…ATPNNASQES (77 aa). Polar residues-rich tracts occupy residues 38-63 and 70-97; these read EQSQQTTKQNAIKSVPQKSASRYTTT and RMSNYSKNNSRNVVTMNNATPNNASQES.

It belongs to the SepF family. Homodimer. Interacts with FtsZ.

Its subcellular location is the cytoplasm. Functionally, cell division protein that is part of the divisome complex and is recruited early to the Z-ring. Probably stimulates Z-ring formation, perhaps through the cross-linking of FtsZ protofilaments. Its function overlaps with FtsA. The sequence is that of Cell division protein SepF from Staphylococcus aureus (strain Mu3 / ATCC 700698).